A 925-amino-acid polypeptide reads, in one-letter code: SGGFDFSFLPQPPQEKAHDGGRYYGVGLGPGPMGLMGPRGPPGASGAPGPQGFQGPAGEPGEPGQTGPAGARGPAGPPGKAGGVVGPQGARGFPGTPGLPGFKGIRGHNGLDGLKGQPGAQGVKGEPGAPGENGTPGQTGARGLPGERGRRGSDGSVGPVGPAGPIGSAGPPGFPGAPGPKGELGPVGNTGPAGPAGPRGEQGLPGVSGPVGPPGNPGANGLTGKGAAGLPGVAGAPGLPGPRGIPGPVGASGATGARGLVGEPGPAGSKGESGGKGEPGSAGPQGPPGSSGEEGKRSTGPTGPPGLRGGPGSRGLPGADGRRGPSGDTGRPGEPGLMGARGLPGSPGNVGPAGKEGPGLPGIDGRPGPIGPAGARGEAGNIGFPGPKGPAGDPGGHAGLAGNRGAPGPDGNNGAQGPPGLQGVQGGKGEQGPAGPPGFQGLPGPAGTTGEAGKPGERGIPGEFGLPGPAGPRGERGPPGESGAVGPSGAIGSRGPSGPPGPDGNKGEPGVVGAPGTAGPAGSGGLPGERGAAGIPGGKGEKGETGLRGEVGTTGRDGARGAPGAVGAPGPAGATGDRGEAGAAGPAGPAGPRGSPGERGEVGPAGPNGFAGPAGAAGQPGAKGERGTKGPKGENGIVGPTGPVGSAGPAGPNGPAGPAGSRGDGGPPGVTGFPGAAGRTGPPGPSGITGPPGPPGAAGKGDQGPVGRGETGAGGPPGFTGEKGPSGEPGTAGPPGTAGPQGLLGAPGILGLPGSRGERGLPGVAGAVGEPGPLGIGPPGARGGKHGNRGEPGPVGSVGPVGALGPRGPSGPQGIRGDKGEPGEKGPRGLPGGLQGLPGLAGQHGDQGSPGPVGPAGPRGPAGPSGPPGKDGRTGHPGAVGPAGIRGSQGSQGPSGPAGPPGPPGPPGASGGGYDFGYEGDFYRA.

The segment at 1–925 is disordered; it reads SGGFDFSFLP…FGYEGDFYRA (925 aa). Residues P10 and P13 each carry the 4-hydroxyproline modification. The span at 22 to 34 shows a compositional bias: gly residues; the sequence is RYYGVGLGPGPMG. A compositionally biased stretch (low complexity) spans 35 to 74; that stretch reads LMGPRGPPGASGAPGPQGFQGPAGEPGEPGQTGPAGARGP. 2 positions are modified to 4-hydroxyproline: P42 and P48. K103 is modified (5-hydroxylysine; alternate). An O-linked (Gal...) hydroxylysine; alternate glycan is attached at K103. Low complexity predominate over residues 154 to 171; sequence DGSVGPVGPAGPIGSAGP. Residues 271–280 show a composition bias toward gly residues; that stretch reads GESGGKGEPG. A compositionally biased stretch (low complexity) spans 281–291; it reads SAGPQGPPGSS. The segment covering 306–315 has biased composition (gly residues); sequence GLRGGPGSRG. 3 positions are modified to 4-hydroxyproline: P317, P332, and P335. Over residues 363 to 379 the composition is skewed to low complexity; sequence IDGRPGPIGPAGARGEA. Residues 423–432 are compositionally biased toward gly residues; sequence GVQGGKGEQG. Low complexity-rich tracts occupy residues 479–496 and 508–518; these read PGES…SRGP and EPGVVGAPGTA. The span at 519 to 528 shows a compositional bias: gly residues; it reads GPAGSGGLPG. Composition is skewed to low complexity over residues 551–595 and 602–622; these read VGTT…PRGS and VGPA…QPGA. Residues 623–632 are compositionally biased toward basic and acidic residues; it reads KGERGTKGPK. Over residues 640-650 the composition is skewed to low complexity; that stretch reads PTGPVGSAGPA. A compositionally biased stretch (gly residues) spans 660-669; sequence GSRGDGGPPG. The segment covering 671 to 680 has biased composition (low complexity); it reads TGFPGAAGRT. Gly residues predominate over residues 696-718; the sequence is GAAGKGDQGPVGRGETGAGGPPG. Low complexity-rich tracts occupy residues 719–753 and 761–771; these read FTGE…LGLP and LPGVAGAVGEP. Residues 772 to 782 show a composition bias toward gly residues; sequence GPLGIGPPGAR. Residues 791 to 806 are compositionally biased toward low complexity; that stretch reads EPGPVGSVGPVGALGP. The segment covering 816–827 has biased composition (basic and acidic residues); it reads RGDKGEPGEKGP. Positions 897 to 907 are enriched in pro residues; sequence PAGPPGPPGPP.

It belongs to the fibrillar collagen family. In terms of assembly, trimers of one alpha 2(I) and two alpha 1(I) chains. Interacts (via C-terminus) with TMEM131 (via PapD-L domain); the interaction is direct and is involved in assembly and TRAPPIII ER-to-Golgi transport complex-dependent secretion of collagen. Post-translationally, prolines at the third position of the tripeptide repeating unit (G-X-Y) are hydroxylated in some or all of the chains. In terms of tissue distribution, expressed in bones.

Its subcellular location is the secreted. The protein resides in the extracellular space. It localises to the extracellular matrix. Type I collagen is a member of group I collagen (fibrillar forming collagen). This Acratocnus sp. (strain SLP-2019) (Ground sloth) protein is Collagen alpha-2(I) chain.